The primary structure comprises 42 residues: Photosystem I reaction center subunit IX (42 aa).

The chain crosses the membrane as a helical span at residues 7 to 27 (YLSIAPVLATLWFGFLVGSLI).

It belongs to the PsaJ family.

It localises to the plastid membrane. May help in the organization of the PsaE and PsaF subunits. The chain is Photosystem I reaction center subunit IX from Aneura mirabilis (Parasitic liverwort).